The chain runs to 82 residues: Sodium channel neurotoxin MeuNaTxalpha-3 (82 aa).

Positions 1 to 8 (LVMAGVES) are cleaved as a signal peptide. One can recognise an LCN-type CS-alpha/beta domain in the interval 10–80 (RDGHIARNNN…VPIKVPGDCH (71 aa)). 4 cysteine pairs are disulfide-bonded: Cys-20-Cys-79, Cys-24-Cys-52, Cys-38-Cys-62, and Cys-42-Cys-64.

Expressed by the venom gland.

Its subcellular location is the secreted. In terms of biological role, alpha toxins bind voltage-independently at site-3 of sodium channels (Nav) and inhibit the inactivation of the activated channels, thereby blocking neuronal transmission. This is Sodium channel neurotoxin MeuNaTxalpha-3 from Mesobuthus eupeus (Lesser Asian scorpion).